We begin with the raw amino-acid sequence, 580 residues long: Laccase-20 (580 aa).

Positions 1–23 (MVASLLCTVAVAVLAVAAVGGEA) are cleaved as a signal peptide. Plastocyanin-like domains follow at residues 31–147 (VVHE…PRDG) and 156–310 (KDVP…YTSA). Asn-36 and Asn-42 each carry an N-linked (GlcNAc...) asparagine glycan. His-81 and His-83 together coordinate Cu cation. A glycan (N-linked (GlcNAc...) asparagine) is linked at Asn-115. Cu cation-binding residues include His-126 and His-128. N-linked (GlcNAc...) asparagine glycans are attached at residues Asn-200, Asn-339, Asn-392, Asn-429, and Asn-460. Positions 419–561 (DFPVRPPRPY…ATAFIVEDGP (143 aa)) constitute a Plastocyanin-like 3 domain. 8 residues coordinate Cu cation: Asn-478, His-481, His-483, His-540, Cys-541, His-542, His-546, and Met-551. The segment at 560–580 (GPTPETSLPPPPPEFKRCDAS) is disordered.

Belongs to the multicopper oxidase family. It depends on Cu cation as a cofactor.

The protein localises to the secreted. It is found in the extracellular space. It localises to the apoplast. The enzyme catalyses 4 hydroquinone + O2 = 4 benzosemiquinone + 2 H2O. In terms of biological role, lignin degradation and detoxification of lignin-derived products. This Oryza sativa subsp. indica (Rice) protein is Laccase-20 (LAC20).